The sequence spans 648 residues: Nucleoside triphosphatase I (648 aa).

A Helicase ATP-binding domain is found at 48–213; sequence FIGLKNLNSM…NNLIGLLRPN (166 aa). 61–68 contributes to the ATP binding site; sequence WDTGTGKT. The DEXH box signature appears at 151–154; that stretch reads DEVH. Residues 379–542 form the Helicase C-terminal domain; it reads YIEACRIILN…KINVVFDLLK (164 aa). Residues 468-534 form a binding to the cap-specific mRNA (nucleoside-2'-O-)-methyltransferase region; the sequence is DIIILDMPWN…DIIKNKQGKI (67 aa).

It belongs to the helicase family. NPH I subfamily. Monomer. Interacts (via C-terminus) with RAP94 (via N-terminus). Interacts with the cap-specific mRNA (nucleoside-2'-O-)-methyltransferase.

Its subcellular location is the virion. The catalysed reaction is a ribonucleoside 5'-triphosphate + H2O = a ribonucleoside 5'-diphosphate + phosphate + H(+). Functionally, DNA-dependent ATPase required for providing the needed energy to achieve the termination of early transcripts. Acts in concert with the RAP94 subunit of the virion RNA polymerase and the capping enzyme/VTF to catalyze release of UUUUUNU-containing nascent RNA from the elongation complex. NPH-I must bind ssDNA in order to exhibit ATPase activity. This is Nucleoside triphosphatase I (NPH1) from Choristoneura fumiferana (Spruce budworm moth).